A 459-amino-acid chain; its full sequence is Cysteine--tRNA ligase (459 aa).

Cys-28 contributes to the Zn(2+) binding site. The 'HIGH' region motif lies at 30-40; sequence ITIYDLCHIGH. Cys-209, His-234, and Glu-238 together coordinate Zn(2+). The 'KMSKS' region motif lies at 266–270; it reads KMSKS. Residue Lys-269 participates in ATP binding.

Belongs to the class-I aminoacyl-tRNA synthetase family. In terms of assembly, monomer. Zn(2+) serves as cofactor.

The protein resides in the cytoplasm. It catalyses the reaction tRNA(Cys) + L-cysteine + ATP = L-cysteinyl-tRNA(Cys) + AMP + diphosphate. The protein is Cysteine--tRNA ligase of Shewanella woodyi (strain ATCC 51908 / MS32).